Here is a 694-residue protein sequence, read N- to C-terminus: Glycine--tRNA ligase beta subunit (694 aa).

Belongs to the class-II aminoacyl-tRNA synthetase family. In terms of assembly, tetramer of two alpha and two beta subunits.

Its subcellular location is the cytoplasm. It carries out the reaction tRNA(Gly) + glycine + ATP = glycyl-tRNA(Gly) + AMP + diphosphate. This is Glycine--tRNA ligase beta subunit from Acidithiobacillus ferrooxidans (strain ATCC 23270 / DSM 14882 / CIP 104768 / NCIMB 8455) (Ferrobacillus ferrooxidans (strain ATCC 23270)).